A 142-amino-acid chain; its full sequence is Bacilliredoxin ABC2448 (142 aa).

This sequence belongs to the bacilliredoxin family.

This Shouchella clausii (strain KSM-K16) (Alkalihalobacillus clausii) protein is Bacilliredoxin ABC2448.